Consider the following 213-residue polypeptide: MVSVDQVKKAREGKKRRFTQTFELIFNLKNVDLRKYRLSTYIVLPRGRGKKMPILAIVGPENKELAEKYFDIVLTREDLKQLDKRTAKKLAKRHYHVVAQADLMPELGKSLLGRFLGIRGKMPNPKAGQILPPNLNEKMLEALREKLNNTVRVNVKKHVTFGVPIGTEDMEDEAIAENADTVINEIISQLPQGKQNIDSVYLKLTMGPAVRVL.

Belongs to the universal ribosomal protein uL1 family. As to quaternary structure, part of the 50S ribosomal subunit.

In terms of biological role, binds directly to 23S rRNA. Probably involved in E site tRNA release. Protein L1 is also a translational repressor protein, it controls the translation of its operon by binding to its mRNA. The sequence is that of Large ribosomal subunit protein uL1 from Nanoarchaeum equitans (strain Kin4-M).